A 483-amino-acid chain; its full sequence is UDP-N-acetylmuramoyl-L-alanyl-D-glutamate--2,6-diaminopimelate ligase (483 aa).

S30 is a UDP-N-acetyl-alpha-D-muramoyl-L-alanyl-D-glutamate binding site. 109–115 (GTNGKTT) contributes to the ATP binding site. Residues 151–152 (TT), S178, and R186 contribute to the UDP-N-acetyl-alpha-D-muramoyl-L-alanyl-D-glutamate site. K218 is modified (N6-carboxylysine). Meso-2,6-diaminopimelate is bound by residues R380, 403 to 406 (DNPR), G453, and E457. The Meso-diaminopimelate recognition motif signature appears at 403 to 406 (DNPR).

This sequence belongs to the MurCDEF family. MurE subfamily. Requires Mg(2+) as cofactor. In terms of processing, carboxylation is probably crucial for Mg(2+) binding and, consequently, for the gamma-phosphate positioning of ATP.

Its subcellular location is the cytoplasm. The enzyme catalyses UDP-N-acetyl-alpha-D-muramoyl-L-alanyl-D-glutamate + meso-2,6-diaminopimelate + ATP = UDP-N-acetyl-alpha-D-muramoyl-L-alanyl-gamma-D-glutamyl-meso-2,6-diaminopimelate + ADP + phosphate + H(+). The protein operates within cell wall biogenesis; peptidoglycan biosynthesis. Functionally, catalyzes the addition of meso-diaminopimelic acid to the nucleotide precursor UDP-N-acetylmuramoyl-L-alanyl-D-glutamate (UMAG) in the biosynthesis of bacterial cell-wall peptidoglycan. The protein is UDP-N-acetylmuramoyl-L-alanyl-D-glutamate--2,6-diaminopimelate ligase of Chlamydia muridarum (strain MoPn / Nigg).